The primary structure comprises 194 residues: Large ribosomal subunit protein bL27c (194 aa).

The transit peptide at 1–57 directs the protein to the chloroplast; that stretch reads MAVTTSMSFNLMASFRGMSLSSSSSSSFFKGEFGPSSLRLPNKSPLSVSPFPLTIES. Positions 57-76 are disordered; the sequence is SAHKKGAGSTKNGRDSKGQR.

Component of the chloroplast large ribosomal subunit (LSU). Mature 70S chloroplast ribosomes of higher plants consist of a small (30S) and a large (50S) subunit. The 30S small subunit contains 1 molecule of ribosomal RNA (16S rRNA) and 24 different proteins. The 50S large subunit contains 3 rRNA molecules (23S, 5S and 4.5S rRNA) and 33 different proteins.

The protein localises to the plastid. It is found in the chloroplast. Functionally, component of the chloroplast ribosome (chloro-ribosome), a dedicated translation machinery responsible for the synthesis of chloroplast genome-encoded proteins, including proteins of the transcription and translation machinery and components of the photosynthetic apparatus. The sequence is that of Large ribosomal subunit protein bL27c (RPL27) from Spinacia oleracea (Spinach).